A 140-amino-acid polypeptide reads, in one-letter code: Natriuretic peptides A (140 aa).

A signal peptide spans 1–24 (MDTRGSFSCGFLLLLLIQLQPSRA). A propeptide spanning residues 25-111 (NPIYNLSPAK…KRLRGVQMPR (87 aa)) is cleaved from the precursor. The disordered stretch occupies residues 55 to 94 (ALESNPDLQEPQTQEEIPPELTDDSDEQKAEPKLASNTPL). The span at 71 to 80 (IPPELTDDSD) shows a compositional bias: acidic residues. The cysteines at positions 118 and 134 are disulfide-linked.

Belongs to the natriuretic peptide family. Post-translationally, cleaved by CORIN upon secretion to produce the functional hormone.

The protein localises to the secreted. In terms of biological role, hormone playing a key role in cardiovascular homeostasis through regulation of natriuresis, diuresis, and vasodilation. Specifically binds and stimulates the cGMP production of the NPR1 receptor. Binds the clearance receptor NPR3. The sequence is that of Natriuretic peptides A (NPPA) from Gallus gallus (Chicken).